Reading from the N-terminus, the 525-residue chain is Glutathione hydrolase-like YwrD proenzyme (525 aa).

The active-site Nucleophile is the Thr-339.

This sequence belongs to the gamma-glutamyltransferase family. In terms of assembly, this enzyme consists of two polypeptide chains, which are synthesized from a single polypeptide. Post-translationally, cleaved by autocatalysis into a large and a small subunit.

The enzyme catalyses an N-terminal (5-L-glutamyl)-[peptide] + an alpha-amino acid = 5-L-glutamyl amino acid + an N-terminal L-alpha-aminoacyl-[peptide]. The catalysed reaction is glutathione + H2O = L-cysteinylglycine + L-glutamate. It catalyses the reaction an S-substituted glutathione + H2O = an S-substituted L-cysteinylglycine + L-glutamate. In terms of biological role, overexpressed protein with an N-terminal His tag has been reported not to hydrolyze glutathione; it is not clear if the construct is processed to 2 subunits. The protein is Glutathione hydrolase-like YwrD proenzyme (ywrD) of Bacillus subtilis (strain 168).